The chain runs to 579 residues: CTP synthase (579 aa).

The interval M1 to L281 is amidoligase domain. S23 is a CTP binding site. S23 contacts UTP. ATP is bound by residues S24–L29 and D81. Mg(2+) is bound by residues D81 and E155. Residues D162–E164, K202–Q207, and K238 each bind CTP. Residues K202–Q207 and K238 contribute to the UTP site. One can recognise a Glutamine amidotransferase type-1 domain in the interval R306–A554. Residue G369 participates in L-glutamine binding. C396 acts as the Nucleophile; for glutamine hydrolysis in catalysis. L-glutamine is bound by residues L397 to Q400, E419, and R480. Catalysis depends on residues H527 and E529.

This sequence belongs to the CTP synthase family. As to quaternary structure, homotetramer.

It carries out the reaction UTP + L-glutamine + ATP + H2O = CTP + L-glutamate + ADP + phosphate + 2 H(+). The catalysed reaction is L-glutamine + H2O = L-glutamate + NH4(+). The enzyme catalyses UTP + NH4(+) + ATP = CTP + ADP + phosphate + 2 H(+). It participates in pyrimidine metabolism; CTP biosynthesis via de novo pathway; CTP from UDP: step 2/2. Allosterically activated by GTP, when glutamine is the substrate; GTP has no effect on the reaction when ammonia is the substrate. The allosteric effector GTP functions by stabilizing the protein conformation that binds the tetrahedral intermediate(s) formed during glutamine hydrolysis. Inhibited by the product CTP, via allosteric rather than competitive inhibition. In terms of biological role, catalyzes the ATP-dependent amination of UTP to CTP with either L-glutamine or ammonia as the source of nitrogen. Regulates intracellular CTP levels through interactions with the four ribonucleotide triphosphates. This is CTP synthase from Mycobacterium sp. (strain KMS).